Consider the following 318-residue polypeptide: Acetyl-coenzyme A carboxylase carboxyl transferase subunit alpha (318 aa).

The region spanning 41-295 (RLTTKSQELT…KRQLIADLGS (255 aa)) is the CoA carboxyltransferase C-terminal domain.

Belongs to the AccA family. As to quaternary structure, acetyl-CoA carboxylase is a heterohexamer composed of biotin carboxyl carrier protein (AccB), biotin carboxylase (AccC) and two subunits each of ACCase subunit alpha (AccA) and ACCase subunit beta (AccD).

The protein localises to the cytoplasm. The catalysed reaction is N(6)-carboxybiotinyl-L-lysyl-[protein] + acetyl-CoA = N(6)-biotinyl-L-lysyl-[protein] + malonyl-CoA. It functions in the pathway lipid metabolism; malonyl-CoA biosynthesis; malonyl-CoA from acetyl-CoA: step 1/1. In terms of biological role, component of the acetyl coenzyme A carboxylase (ACC) complex. First, biotin carboxylase catalyzes the carboxylation of biotin on its carrier protein (BCCP) and then the CO(2) group is transferred by the carboxyltransferase to acetyl-CoA to form malonyl-CoA. The sequence is that of Acetyl-coenzyme A carboxylase carboxyl transferase subunit alpha from Idiomarina loihiensis (strain ATCC BAA-735 / DSM 15497 / L2-TR).